The sequence spans 367 residues: 4-hydroxy-3-methylbut-2-en-1-yl diphosphate synthase (flavodoxin) (367 aa).

[4Fe-4S] cluster contacts are provided by Cys265, Cys268, Cys300, and Glu307.

The protein belongs to the IspG family. [4Fe-4S] cluster serves as cofactor.

It catalyses the reaction (2E)-4-hydroxy-3-methylbut-2-enyl diphosphate + oxidized [flavodoxin] + H2O + 2 H(+) = 2-C-methyl-D-erythritol 2,4-cyclic diphosphate + reduced [flavodoxin]. The protein operates within isoprenoid biosynthesis; isopentenyl diphosphate biosynthesis via DXP pathway; isopentenyl diphosphate from 1-deoxy-D-xylulose 5-phosphate: step 5/6. Its function is as follows. Converts 2C-methyl-D-erythritol 2,4-cyclodiphosphate (ME-2,4cPP) into 1-hydroxy-2-methyl-2-(E)-butenyl 4-diphosphate. The sequence is that of 4-hydroxy-3-methylbut-2-en-1-yl diphosphate synthase (flavodoxin) from Bacillus anthracis.